We begin with the raw amino-acid sequence, 804 residues long: Leucine--tRNA ligase (804 aa).

The 'HIGH' region signature appears at 40-51; it reads PYPSGQGLHVGH. The 'KMSKS' region signature appears at 576 to 580; the sequence is KMSKS. An ATP-binding site is contributed by Lys579.

This sequence belongs to the class-I aminoacyl-tRNA synthetase family.

It is found in the cytoplasm. The enzyme catalyses tRNA(Leu) + L-leucine + ATP = L-leucyl-tRNA(Leu) + AMP + diphosphate. The chain is Leucine--tRNA ligase from Oceanobacillus iheyensis (strain DSM 14371 / CIP 107618 / JCM 11309 / KCTC 3954 / HTE831).